A 230-amino-acid polypeptide reads, in one-letter code: Octanoyltransferase (230 aa).

Residues 38-215 (AGGADTLLLL…AVCAALDGVL (178 aa)) form the BPL/LPL catalytic domain. Substrate contacts are provided by residues 76–83 (RGGKITWH), 145–147 (AIG), and 158–160 (GFA). The active-site Acyl-thioester intermediate is Cys-176.

The protein belongs to the LipB family.

It localises to the cytoplasm. It carries out the reaction octanoyl-[ACP] + L-lysyl-[protein] = N(6)-octanoyl-L-lysyl-[protein] + holo-[ACP] + H(+). Its pathway is protein modification; protein lipoylation via endogenous pathway; protein N(6)-(lipoyl)lysine from octanoyl-[acyl-carrier-protein]: step 1/2. Catalyzes the transfer of endogenously produced octanoic acid from octanoyl-acyl-carrier-protein onto the lipoyl domains of lipoate-dependent enzymes. Lipoyl-ACP can also act as a substrate although octanoyl-ACP is likely to be the physiological substrate. The chain is Octanoyltransferase from Mycobacterium bovis (strain BCG / Tokyo 172 / ATCC 35737 / TMC 1019).